A 361-amino-acid chain; its full sequence is DNA replication and repair protein RecF (361 aa).

30–37 (GPNGSGKT) provides a ligand contact to ATP.

This sequence belongs to the RecF family.

Its subcellular location is the cytoplasm. In terms of biological role, the RecF protein is involved in DNA metabolism; it is required for DNA replication and normal SOS inducibility. RecF binds preferentially to single-stranded, linear DNA. It also seems to bind ATP. The polypeptide is DNA replication and repair protein RecF (Yersinia pseudotuberculosis serotype O:1b (strain IP 31758)).